We begin with the raw amino-acid sequence, 302 residues long: MKTLLILTILAMATTIATANMQVDPSGQVQWPQQQPFPQPQQPFCQQPQRTIPQPHQTFHHQPQQTFPQPQQTYPHQPQQQFPQTQQPQQPFPQPQQTFPQQPQLPFPQQPQQPFPQPQQPQQPFPQSQQPQQPFPQPQQQFPQPQQPQQSFPQQQQPAIQSFLQQQMNPCKNFLLQQCNHVSLVSSLVSIILPRSDCQVMQQQCCQQLAQIPQQLQCAAIHSVAHSIIMQQEQQQGVPILRPLFQLAQGLGIIQPQQPAQLEGIRSLVLKTLPTMCNVYVPPDCSTINVPYANIDAGIGGQ.

Positions 1–19 (MKTLLILTILAMATTIATA) are cleaved as a signal peptide. Residues 27–159 (GQVQWPQQQP…QSFPQQQQPA (133 aa)) are disordered. The segment covering 42-102 (QPFCQQPQRT…PQPQQTFPQQ (61 aa)) has biased composition (low complexity). Over residues 103-124 (PQLPFPQQPQQPFPQPQQPQQP) the composition is skewed to pro residues. Low complexity predominate over residues 125 to 159 (FPQSQQPQQPFPQPQQQFPQPQQPQQSFPQQQQPA).

The protein belongs to the gliadin/glutenin family.

Its function is as follows. Gliadin is the major seed storage protein in wheat. The protein is Gamma-gliadin of Triticum aestivum (Wheat).